We begin with the raw amino-acid sequence, 308 residues long: MHPTRSFQGLILTLHNYWAEHGCAILQPYDMEVGAGTFHPATTLRSLGPKPWKAAYVQPSRRPKDGRYGENPNRLQHYYQYQVLIKPSPPNLQDLYLGSLKAIGLDPTLHDVRFVEDDWESPTLGAWGLGWECWCDGMEVSQFTYFQQVCGIECSPVAGELTYGLERLAMYVQGVDNVYDLNFNGLEGDEKVTYGDVFLQAEQEYSRYNFEMANTETLHQHFIDAERECEAILKAGSTGENSLHKCVFPAYDQCIKASHVFNLMDARGVISVTERQSYILRVRNLARQCGEAFLLTDAGGFNFKREGE.

It belongs to the class-II aminoacyl-tRNA synthetase family. In terms of assembly, tetramer of two alpha and two beta subunits.

It is found in the cytoplasm. It catalyses the reaction tRNA(Gly) + glycine + ATP = glycyl-tRNA(Gly) + AMP + diphosphate. This Brucella canis (strain ATCC 23365 / NCTC 10854 / RM-666) protein is Glycine--tRNA ligase alpha subunit.